The chain runs to 507 residues: RNA-binding protein MEX3B (507 aa).

The segment at 1 to 22 is disordered; it reads MPSSLFADMERNGSGGGGGETL. 2 KH domains span residues 59–120 and 155–216; these read MTEC…RREI and QTTI…REEI. Disordered stretches follow at residues 256-279 and 426-450; these read NQSS…LGSA and SSSS…GMRR. The span at 426-446 shows a compositional bias: low complexity; sequence SSSSSSSSSSSSSSSSSSSSS. The RING-type zinc-finger motif lies at 456-496; sequence CSICFESEVIAALVPCGHNLFCMECANRICEKNQPQCPVCH.

It is found in the cytoplasm. It localises to the nucleus. The protein localises to the cytoplasmic granule. Its subcellular location is the P-body. In terms of biological role, RNA-binding protein. May be involved in post-transcriptional regulatory mechanisms. This is RNA-binding protein MEX3B (mex3b) from Xenopus laevis (African clawed frog).